A 100-amino-acid chain; its full sequence is Small ribosomal subunit protein uS14 (100 aa).

Belongs to the universal ribosomal protein uS14 family. As to quaternary structure, part of the 30S ribosomal subunit. Contacts proteins S3 and S10.

Binds 16S rRNA, required for the assembly of 30S particles and may also be responsible for determining the conformation of the 16S rRNA at the A site. The chain is Small ribosomal subunit protein uS14 from Acaryochloris marina (strain MBIC 11017).